The following is a 316-amino-acid chain: Transaldolase (316 aa).

The active-site Schiff-base intermediate with substrate is lysine 132.

The protein belongs to the transaldolase family. Type 1 subfamily. As to quaternary structure, homodimer.

The protein resides in the cytoplasm. It carries out the reaction D-sedoheptulose 7-phosphate + D-glyceraldehyde 3-phosphate = D-erythrose 4-phosphate + beta-D-fructose 6-phosphate. The protein operates within carbohydrate degradation; pentose phosphate pathway; D-glyceraldehyde 3-phosphate and beta-D-fructose 6-phosphate from D-ribose 5-phosphate and D-xylulose 5-phosphate (non-oxidative stage): step 2/3. In terms of biological role, transaldolase is important for the balance of metabolites in the pentose-phosphate pathway. The polypeptide is Transaldolase (Marinomonas sp. (strain MWYL1)).